We begin with the raw amino-acid sequence, 52 residues long: NADH dehydrogenase [ubiquinone] 1 alpha subcomplex subunit 4 homolog (52 aa).

Residues 14-30 (LYPLGAAVATAVGFATY) traverse the membrane as a helical segment.

This sequence belongs to the complex I NDUFA4 subunit family.

Its subcellular location is the mitochondrion inner membrane. In terms of biological role, accessory subunit of the mitochondrial membrane respiratory chain NADH dehydrogenase (Complex I), that is believed to be not involved in catalysis. Complex I functions in the transfer of electrons from NADH to the respiratory chain. The immediate electron acceptor for the enzyme is believed to be ubiquinone. The polypeptide is NADH dehydrogenase [ubiquinone] 1 alpha subcomplex subunit 4 homolog (Schizosaccharomyces pombe (strain 972 / ATCC 24843) (Fission yeast)).